Reading from the N-terminus, the 301-residue chain is NADH-cytochrome b5 reductase 3 (301 aa).

A lipid anchor (N-myristoyl glycine) is attached at glycine 2. The 113-residue stretch at 40 to 152 folds into the FAD-binding FR-type domain; sequence DIKYPLRLID…RGPSGLLVYQ (113 aa). An N6-acetyllysine modification is found at lysine 42. Tyrosine 43 carries the post-translational modification Phosphotyrosine. Arginine 92, proline 93, tyrosine 94, valine 109, lysine 111, and phenylalanine 114 together coordinate FAD. At lysine 120 the chain carries N6-acetyllysine. FAD is bound by residues lysine 126, methionine 127, serine 128, and threonine 185.

It belongs to the flavoprotein pyridine nucleotide cytochrome reductase family. As to quaternary structure, component of a complex composed of cytochrome b5, NADH-cytochrome b5 reductase (CYB5R3) and MTARC2. Interacts with MTLN; the interaction is required to maintain cellular lipid composition and leads to stimulation of mitochondrial respiratory complex I activity. Requires FAD as cofactor. In terms of tissue distribution, expressed at late stages of erythroid maturation.

It localises to the endoplasmic reticulum membrane. It is found in the mitochondrion outer membrane. The protein localises to the cytoplasm. It carries out the reaction 2 Fe(III)-[cytochrome b5] + NADH = 2 Fe(II)-[cytochrome b5] + NAD(+) + H(+). Functionally, catalyzes the reduction of two molecules of cytochrome b5 using NADH as the electron donor. The chain is NADH-cytochrome b5 reductase 3 from Homo sapiens (Human).